The primary structure comprises 481 residues: Tryptophan--tRNA ligase, cytoplasmic (481 aa).

In terms of domain architecture, WHEP-TRS spans 12-68; that stretch reads SPLELFNSIAAQGELVRSLKAGNAPKDEIESAVKMLLSLKMNYKTAMGEEYKAGCPP. The interval 65–85 is disordered; that stretch reads GCPPGNSTAGSNGDPDATKAS. Lysine 158 bears the N6-succinyllysine mark. The 'HIGH' region signature appears at 168–177; the sequence is PSSEAMHLGH. Positions 353-357 match the 'KMSKS' region motif; it reads KMSAS. Serine 355 carries the post-translational modification Phosphoserine.

It belongs to the class-I aminoacyl-tRNA synthetase family. Homodimer. Interacts with oxidized form of GAPDH. In terms of processing, proteolytic cleavage generates 2 forms; T1-TrpRS and T2-TrpRS.

Its subcellular location is the cytoplasm. The enzyme catalyses tRNA(Trp) + L-tryptophan + ATP = L-tryptophyl-tRNA(Trp) + AMP + diphosphate + H(+). Catalyzes the attachment of tryptophan to tRNA(Trp) in a two-step reaction: tryptophan is first activated by ATP to form Trp-AMP and then transferred to the acceptor end of the tRNA(Trp). Could also possess an angiostatic activity. This is Tryptophan--tRNA ligase, cytoplasmic from Rattus norvegicus (Rat).